Consider the following 345-residue polypeptide: UPF0324 membrane protein CTC_01844 (345 aa).

10 helical membrane-spanning segments follow: residues 7 to 24, 28 to 50, 70 to 87, 91 to 113, 120 to 142, 152 to 174, 181 to 203, 209 to 231, 261 to 283, and 316 to 338; these read YSVGILFTAVLAVISGFI, IPYRLIGAGVFALLIGMFLNPIV, LAIILMGITLSFSQVLEV, SLIVMVFTLITAFGGGYLLGKLF, SGLISAGTGICGGSAIAAISPVI, AISATFIFDVIMVILFPIAGKYF, YGLWAGTAVNDTSSVVAAGYAFS, FSVIVKLTRTLSIVPVVLIFSYI, IFPWFILLFLVMVAIKSTGIIPN, and SGFAPAVHGFIISLLVVVVSFLV.

It belongs to the UPF0324 family.

Its subcellular location is the cell membrane. The sequence is that of UPF0324 membrane protein CTC_01844 from Clostridium tetani (strain Massachusetts / E88).